Here is a 167-residue protein sequence, read N- to C-terminus: Leptin (167 aa).

A signal peptide spans 1-21; the sequence is MCWRPLCRFLWLWSYLSYVQA. Cysteine 117 and cysteine 167 are disulfide-bonded.

This sequence belongs to the leptin family.

The protein localises to the secreted. Its function is as follows. Key player in the regulation of energy balance and body weight control. Once released into the circulation, has central and peripheral effects by binding LEPR, found in many tissues, which results in the activation of several major signaling pathways. In the hypothalamus, acts as an appetite-regulating factor that induces a decrease in food intake and an increase in energy consumption by inducing anorexinogenic factors and suppressing orexigenic neuropeptides, also regulates bone mass and secretion of hypothalamo-pituitary-adrenal hormones. In the periphery, increases basal metabolism, influences reproductive function, regulates pancreatic beta-cell function and insulin secretion, is pro-angiogenic for endothelial cell and affects innate and adaptive immunity. In the arcuate nucleus of the hypothalamus, activates by depolarization POMC neurons inducing FOS and SOCS3 expression to release anorexigenic peptides and inhibits by hyperpolarization NPY neurons inducing SOCS3 with a consequent reduction on release of orexigenic peptides. In addition to its known satiety inducing effect, has a modulatory role in nutrient absorption. In the intestine, reduces glucose absorption by enterocytes by activating PKC and leading to a sequential activation of p38, PI3K and ERK signaling pathways which exerts an inhibitory effect on glucose absorption. Acts as a growth factor on certain tissues, through the activation of different signaling pathways increases expression of genes involved in cell cycle regulation such as CCND1, via JAK2-STAT3 pathway, or VEGFA, via MAPK1/3 and PI3K-AKT1 pathways. May also play an apoptotic role via JAK2-STAT3 pathway and up-regulation of BIRC5 expression. Pro-angiogenic, has mitogenic activity on vascular endothelial cells and plays a role in matrix remodeling by regulating the expression of matrix metalloproteinases (MMPs) and tissue inhibitors of metalloproteinases (TIMPs). In innate immunity, modulates the activity and function of neutrophils by increasing chemotaxis and the secretion of oxygen radicals. Increases phagocytosis by macrophages and enhances secretion of pro-inflammatory mediators. Increases cytotoxic ability of NK cells. Plays a pro-inflammatory role, in synergy with IL1B, by inducing NOS2 which promotes the production of IL6, IL8 and Prostaglandin E2, through a signaling pathway that involves JAK2, PI3K, MAP2K1/MEK1 and MAPK14/p38. In adaptive immunity, promotes the switch of memory T-cells towards T helper-1 cell immune responses. Increases CD4(+)CD25(-) T cells proliferation and reduces autophagy during TCR (T cell receptor) stimulation, through MTOR signaling pathway activation and BCL2 up-regulation. The polypeptide is Leptin (Lep) (Mus musculus (Mouse)).